The following is a 295-amino-acid chain: Putative S-adenosyl-L-methionine-dependent methyltransferase Mvan_0910 (295 aa).

S-adenosyl-L-methionine is bound by residues aspartate 126 and 155 to 156; that span reads DL.

The protein belongs to the UPF0677 family.

In terms of biological role, exhibits S-adenosyl-L-methionine-dependent methyltransferase activity. The chain is Putative S-adenosyl-L-methionine-dependent methyltransferase Mvan_0910 from Mycolicibacterium vanbaalenii (strain DSM 7251 / JCM 13017 / BCRC 16820 / KCTC 9966 / NRRL B-24157 / PYR-1) (Mycobacterium vanbaalenii).